The primary structure comprises 340 residues: tRNA N6-adenosine threonylcarbamoyltransferase (340 aa).

Positions 111 and 115 each coordinate Fe cation. Substrate contacts are provided by residues 134 to 138 (LVSGG), D167, G180, and N276. Residue D304 participates in Fe cation binding.

The protein belongs to the KAE1 / TsaD family. Fe(2+) is required as a cofactor.

The protein resides in the cytoplasm. The enzyme catalyses L-threonylcarbamoyladenylate + adenosine(37) in tRNA = N(6)-L-threonylcarbamoyladenosine(37) in tRNA + AMP + H(+). In terms of biological role, required for the formation of a threonylcarbamoyl group on adenosine at position 37 (t(6)A37) in tRNAs that read codons beginning with adenine. Is involved in the transfer of the threonylcarbamoyl moiety of threonylcarbamoyl-AMP (TC-AMP) to the N6 group of A37, together with TsaE and TsaB. TsaD likely plays a direct catalytic role in this reaction. The polypeptide is tRNA N6-adenosine threonylcarbamoyltransferase (Helicobacter pylori (strain G27)).